A 96-amino-acid polypeptide reads, in one-letter code: UPF0235 protein CAB243 (96 aa).

Belongs to the UPF0235 family.

The polypeptide is UPF0235 protein CAB243 (Chlamydia abortus (strain DSM 27085 / S26/3) (Chlamydophila abortus)).